The primary structure comprises 120 residues: Small ribosomal subunit protein uS10 (120 aa).

Phosphoserine occurs at positions 16 and 18.

It belongs to the universal ribosomal protein uS10 family. Expressed ubiquitously in embryos, highest expression is in the midgut.

The chain is Small ribosomal subunit protein uS10 (RpS20) from Drosophila melanogaster (Fruit fly).